We begin with the raw amino-acid sequence, 561 residues long: Acyl-CoA ligase ppsA (561 aa).

Asparagine 21 is a glycosylation site (N-linked (GlcNAc...) asparagine). A helical transmembrane segment spans residues 71 to 91 (SILYPALFLAIVGVGAVYMGA). 203 to 214 (MFATSGTSGLPK) is a binding site for AMP. Asparagine 396 carries N-linked (GlcNAc...) asparagine glycosylation. Residues 462-540 (ELEAELAQHP…DSIPRNSGGK (79 aa)) are AMP-binding.

The protein belongs to the ATP-dependent AMP-binding enzyme family.

It localises to the membrane. It catalyses the reaction acetate + ATP + CoA = acetyl-CoA + ADP + phosphate. It carries out the reaction propanoate + ATP + CoA = propanoyl-CoA + AMP + diphosphate. It participates in secondary metabolite biosynthesis. Functionally, acyl-CoA ligase; part of the gene cluster that mediates the biosynthesis of 2,4'-dihydroxy-3'-methoxypropiophenone. The first step of the pathway is the conversion of acetate into acetyl-CoA by the acyl-CoA ligase ppsA. Acetyl-CoA is then used as a starter unit by the polyketide synthase ppsB and condensed with 4 malonyl-CoA unit to produce the pentaketide backbone. During polyketide extension, the polykedite chain is probably reduced and dehydrated by the KR and PT domains, respectively. O-methylation seems to be catalyzed by an unknown methyltransferase rather than by the CMeT domain of ppsB. Two hydroxylations and one further decarboxylation step catalyzed by yet unknown enzymes are then required to yield 4'-hydroxy-3'-methoxypropiophenone. PpsC functions as a carrier protein to transport 4'-hydroxy-3'-methoxypropiophenone to a specific cell compartment in which 4'-hydroxy-3'-methoxypropiophenone is hydroxylated to 2,4'-dihydroxy-3'-methoxypropiophenone by a still to be identified enzyme. In Aspergillus oryzae (strain ATCC 42149 / RIB 40) (Yellow koji mold), this protein is Acyl-CoA ligase ppsA.